Reading from the N-terminus, the 317-residue chain is Putative 2-hydroxyacid dehydrogenase SE_1879 (317 aa).

NAD(+) contacts are provided by residues 155-156, 234-236, and D260; these read EI and AGR. The active site involves R236. The active site involves E265. Residue H283 is the Proton donor of the active site. Residue 283–286 coordinates NAD(+); it reads HIGN.

This sequence belongs to the D-isomer specific 2-hydroxyacid dehydrogenase family.

The protein is Putative 2-hydroxyacid dehydrogenase SE_1879 of Staphylococcus epidermidis (strain ATCC 12228 / FDA PCI 1200).